The following is a 556-amino-acid chain: Arginine--tRNA ligase 1 (556 aa).

A 'HIGH' region motif is present at residues 132 to 142 (ANPTGNLHLGH).

This sequence belongs to the class-I aminoacyl-tRNA synthetase family. In terms of assembly, monomer.

The protein resides in the cytoplasm. It catalyses the reaction tRNA(Arg) + L-arginine + ATP = L-arginyl-tRNA(Arg) + AMP + diphosphate. The protein is Arginine--tRNA ligase 1 (argS1) of Halalkalibacterium halodurans (strain ATCC BAA-125 / DSM 18197 / FERM 7344 / JCM 9153 / C-125) (Bacillus halodurans).